Here is a 618-residue protein sequence, read N- to C-terminus: MPAYRSRTTTHGRNMAGARALWRATGMKDGDFGKPIIAIANSFTQFVPGHVHLKDMGSLVASAIEEVGGIAKEFNTIAVDDGIAMGHGGMLYSLPSRELIADSVEYMVNAHCADAIVCISNCDKITPGMLMASMRLNIPVVFVSGGPMEAGKINGPGVTRKLDLIDSMVAAANPDVSDSESEQIERSACPTCGSCSGMFTANSMNCLTEALGLSLPGNGSLLATHNDRRELFLSAGRRIVELARRWYEQDDASVLPRSIATRAAFENAMTLDIAMGGSTNTVLHLLAAAREGEVDFHMHDIDRLSRRVPNLCKVAPAKNDVHMEDVHRAGGIPAILGELDRAGLIHKDVPTVYAPTLGDALKKWDILNGDEEAAHLFKAAPGNVRTVHAFSQSSRYHELDQDREGGVLRDKAHAFSQDGGLAVLYGNLAEDGAIVKTAGVEASILTFTGTARVFESQDDAVAAILGNRIVAGDVVVIRYEGPKGGPGMQEMLYPTSYLKSKGLGKVCALITDGRFSGGSSGLSIGHMSPEAAEGGLIGLVEDGDRIEIDIPNRTLHLAVSDSDIADRRERMNARGASAWKPNRERVVSKALQAYAAMTTSAAHGAVRDLSQIIVKTRI.

Aspartate 81 is a Mg(2+) binding site. A [2Fe-2S] cluster-binding site is contributed by cysteine 122. Mg(2+) contacts are provided by aspartate 123 and lysine 124. Position 124 is an N6-carboxylysine (lysine 124). Cysteine 195 serves as a coordination point for [2Fe-2S] cluster. Glutamate 490 contributes to the Mg(2+) binding site. Residue serine 516 is the Proton acceptor of the active site.

The protein belongs to the IlvD/Edd family. In terms of assembly, homodimer. [2Fe-2S] cluster is required as a cofactor. It depends on Mg(2+) as a cofactor.

It catalyses the reaction (2R)-2,3-dihydroxy-3-methylbutanoate = 3-methyl-2-oxobutanoate + H2O. The enzyme catalyses (2R,3R)-2,3-dihydroxy-3-methylpentanoate = (S)-3-methyl-2-oxopentanoate + H2O. It functions in the pathway amino-acid biosynthesis; L-isoleucine biosynthesis; L-isoleucine from 2-oxobutanoate: step 3/4. It participates in amino-acid biosynthesis; L-valine biosynthesis; L-valine from pyruvate: step 3/4. Functionally, functions in the biosynthesis of branched-chain amino acids. Catalyzes the dehydration of (2R,3R)-2,3-dihydroxy-3-methylpentanoate (2,3-dihydroxy-3-methylvalerate) into 2-oxo-3-methylpentanoate (2-oxo-3-methylvalerate) and of (2R)-2,3-dihydroxy-3-methylbutanoate (2,3-dihydroxyisovalerate) into 2-oxo-3-methylbutanoate (2-oxoisovalerate), the penultimate precursor to L-isoleucine and L-valine, respectively. This is Dihydroxy-acid dehydratase from Gluconobacter oxydans (strain 621H) (Gluconobacter suboxydans).